The sequence spans 85 residues: N.vectensis toxin 1 5 (85 aa).

The N-terminal stretch at 1–20 (MASFKIVIVCLALLVAVACA) is a signal peptide. A propeptide spanning residues 21-36 (RRRDMMSDDELDFHLS) is cleaved from the precursor. 3 disulfide bridges follow: Cys-42–Cys-82, Cys-44–Cys-72, and Cys-65–Cys-83.

Belongs to the sea anemone sodium channel inhibitory toxin family. Type II subfamily. As to expression, expressed in ectodermal glands and in clumps outside of the extodermal layer. Is not expressed in nematocytes. In adult female tissues, shows similar expression levels in mesenteries (gametes-producing tissue), tentacles, pharynx and physa.

Its subcellular location is the secreted. Binds to site 3 of voltage-gated sodium channels and inhibits the inactivation process. Is highly active on DmNav1/TipE (drosophila) and is only extremely weakly active on rat Nav1.4-beta-1/SCN4A-SCN1B, and on human Nav1.5-beta-1/SCN5A-beta-1. This reveals high specificity for arthropod over mammalian channels. In vivo, when released into the medium, this recombinant toxin induces impaired swimming, paralysis and death of the crustacean A.nauplii within several hours. Also causes paralysis of cherry shrimps immediately after injection at very low doses. Its effect on zebrafish (D.rerio) larvae is also rapid, since it induces tail twitching accompanied by impaired swimming after 20 minutes and complete paralysis within 45 minutes. It has also been observed to cause death of zebrafish larvae within 1 hour. This is N.vectensis toxin 1 5 from Nematostella vectensis (Starlet sea anemone).